The sequence spans 124 residues: Fluoride-specific ion channel FluC 2 (124 aa).

A run of 4 helical transmembrane segments spans residues 8 to 28 (LPNQ…GALV), 34 to 54 (NDLL…GLPF), 60 to 80 (LLLG…MVEC), and 93 to 113 (LGLI…GFLI). Residues glycine 68 and threonine 71 each coordinate Na(+).

The protein belongs to the fluoride channel Fluc/FEX (TC 1.A.43) family.

It localises to the cell inner membrane. It catalyses the reaction fluoride(in) = fluoride(out). Its activity is regulated as follows. Na(+) is not transported, but it plays an essential structural role and its presence is essential for fluoride channel function. Functionally, fluoride-specific ion channel. Important for reducing fluoride concentration in the cell, thus reducing its toxicity. In Prochlorococcus marinus (strain MIT 9313), this protein is Fluoride-specific ion channel FluC 2.